Reading from the N-terminus, the 840-residue chain is Protein translocase subunit SecA (840 aa).

Residues Gln87, 105-109 (GEGKT), and Asp494 contribute to the ATP site. A disordered region spans residues 518–537 (RRIDNQLRGRSGRQGDPGSS). Positions 826, 828, 837, and 838 each coordinate Zn(2+).

This sequence belongs to the SecA family. In terms of assembly, monomer and homodimer. Part of the essential Sec protein translocation apparatus which comprises SecA, SecYEG and auxiliary proteins SecDF-YajC and YidC. Requires Zn(2+) as cofactor.

Its subcellular location is the cell inner membrane. It is found in the cytoplasm. The catalysed reaction is ATP + H2O + cellular proteinSide 1 = ADP + phosphate + cellular proteinSide 2.. Part of the Sec protein translocase complex. Interacts with the SecYEG preprotein conducting channel. Has a central role in coupling the hydrolysis of ATP to the transfer of proteins into and across the cell membrane, serving as an ATP-driven molecular motor driving the stepwise translocation of polypeptide chains across the membrane. The protein is Protein translocase subunit SecA of Desulforapulum autotrophicum (strain ATCC 43914 / DSM 3382 / VKM B-1955 / HRM2) (Desulfobacterium autotrophicum).